Reading from the N-terminus, the 107-residue chain is Nucleoid-associated protein BT_0257 (107 aa).

This sequence belongs to the YbaB/EbfC family. Homodimer.

It localises to the cytoplasm. The protein localises to the nucleoid. Functionally, binds to DNA and alters its conformation. May be involved in regulation of gene expression, nucleoid organization and DNA protection. This chain is Nucleoid-associated protein BT_0257, found in Bartonella tribocorum (strain CIP 105476 / IBS 506).